The sequence spans 437 residues: GTPase Der (437 aa).

EngA-type G domains lie at 4–167 and 176–351; these read PVIA…PEDE and IRIS…ENHN. GTP is bound by residues 10 to 17, 57 to 61, 119 to 122, 182 to 189, 229 to 233, and 294 to 297; these read GRPNVGKS, DTGGI, NKID, DTAGM, and NKWD. The KH-like domain maps to 352–436; that stretch reads LRVPTHVLND…PIKIIARKKN (85 aa).

Belongs to the TRAFAC class TrmE-Era-EngA-EngB-Septin-like GTPase superfamily. EngA (Der) GTPase family. As to quaternary structure, associates with the 50S ribosomal subunit.

Functionally, GTPase that plays an essential role in the late steps of ribosome biogenesis. This chain is GTPase Der, found in Halalkalibacterium halodurans (strain ATCC BAA-125 / DSM 18197 / FERM 7344 / JCM 9153 / C-125) (Bacillus halodurans).